The sequence spans 477 residues: MKILFASSESYPFIKTGGLGDVSYALPKALRKIGIDARVIIPKYSDIPEYFRYNTHHIASFGVPVGWRSQYGGLEYYEYDGVPFYFIDNDYYFKRSGLYGYYDDGERFAYFSRGVLQAITYMQDFNPDIIQCNDWQTAIIPVLLKDHYRNYRNYNHIKTIFTIHNLKYQGVFGKSVLGELLCLNEGYYNENALKFYDGISFMKGGILFSDKLSTVSRTYAEEIKDPYYGEHLDGLLRSRSYDLWGIVNGIDYDILNPETDKDLFFNFDSSTLYNKTKNKIELQKMLNLPVSENIPMIGIVSRLVSQKGLDLISCVLEDLLQDGIQLVVLGTGDAKYENMFKYFAWKYPNKLSANIQFNNSLAQKIYGASDMFLMPSKFEPCGIGQLIALRYGSLPIVRETGGLKDTVRPFNPITGEGNGFSFTNYNAHDMLHVIRNAEYFYYNEKYNWNKLVQTAMNDDNSWSKSAEIYRNLYMSVL.

Residue Lys-15 coordinates ADP-alpha-D-glucose.

It belongs to the glycosyltransferase 1 family. Bacterial/plant glycogen synthase subfamily.

It carries out the reaction [(1-&gt;4)-alpha-D-glucosyl](n) + ADP-alpha-D-glucose = [(1-&gt;4)-alpha-D-glucosyl](n+1) + ADP + H(+). It participates in glycan biosynthesis; glycogen biosynthesis. In terms of biological role, synthesizes alpha-1,4-glucan chains using ADP-glucose. The sequence is that of Glycogen synthase from Clostridium acetobutylicum (strain ATCC 824 / DSM 792 / JCM 1419 / IAM 19013 / LMG 5710 / NBRC 13948 / NRRL B-527 / VKM B-1787 / 2291 / W).